The primary structure comprises 79 residues: Peptide Im-5 (79 aa).

The first 23 residues, 1 to 23 (MKYRKQLLVLFFAYFLVVNESEA), serve as a signal peptide directing secretion. The propeptide occupies 49-79 (RALMKRDLQDRMDPYQRNLKLDRYLKQLALD).

It belongs to the non-disulfide-bridged peptide (NDBP) superfamily. Medium-length antimicrobial peptide (group 3) family. Expressed by the venom gland.

The protein localises to the secreted. It is found in the target cell membrane. Antimicrobial peptide that may act by disrupting the integrity of the bacterial cell membrane. Has antibacterial activity against Gram-negative bacterium E.coli NBRC 3972 (MIC=10 uM) and against Gram-positive bacteria S.aureus NBRC 13276 (MIC=2.5-5 uM) and B.subtilis NBRC 3009 (MIC=0.5-1 uM). Also shows potent activity against antibiotic-sensitive and -resistant Acinetobacter baumannii (MIC=1.8-3.6 uM). Shows cytolytic activity against human and sheep erythrocytes. Toxic to cricket A.domestica. The sequence is that of Peptide Im-5 from Isometrus maculatus (Lesser brown scorpion).